Consider the following 224-residue polypeptide: Peptidyl-prolyl cis-trans isomerase FKBP3 (224 aa).

Ala2 carries the post-translational modification N-acetylalanine. Ser36 bears the Phosphoserine mark. The segment covering 89 to 102 has biased composition (basic and acidic residues); that stretch reads KLNEDKPKETKSEE. Positions 89–111 are disordered; sequence KLNEDKPKETKSEETLDEGPPKY. Lys99 is modified (N6-acetyllysine). Residues 128–224 form the PPIase FKBP-type domain; sequence GDVVHCWYTG…TFEVELVDID (97 aa). Position 152 is a phosphoserine (Ser152). At Lys170 the chain carries N6-acetyllysine.

This sequence belongs to the FKBP-type PPIase family.

The protein resides in the nucleus. The enzyme catalyses [protein]-peptidylproline (omega=180) = [protein]-peptidylproline (omega=0). With respect to regulation, inhibited preferentially by rapamycin over FK506. Functionally, FK506- and rapamycin-binding proteins (FKBPs) constitute a family of receptors for the two immunosuppressants which inhibit T-cell proliferation by arresting two distinct cytoplasmic signal transmission pathways. PPIases accelerate the folding of proteins. The chain is Peptidyl-prolyl cis-trans isomerase FKBP3 (FKBP3) from Homo sapiens (Human).